The following is a 539-amino-acid chain: MHDKILILDFGSQVTQLIARRVREAHVYCEIHPNDVSDEFVREFAPKAVILSGSHASTYEDHQLRAPQAVWDLGVPVLGICYGMQTMAVQLGGKVEWSDHREFGYAEMRAHGHTRLLDGIEDFTTAEGHGMLKVWMSHGDKVAELPPGFALMASTPSCPIAGMADEARGYYAVQFHPEVTHTVKGRQIIERFVLQIAGAKPDWIMSNHIEEAVAKIREQVGDEEVILGLSGGVDSSVAAALIHRAIGDQLTCVFVDHGLLRLNEGKMVLDMFEGRLHAKVVHVDASEQFLGHLTGVTDPEAKRKIIGREFVEVFQAEAQKLSKAKWLAQGTIYPDVVESGGTKTKKATTIKSHHNVGGLPETLGLKLLEPLRDLFKDEVRELGVALGLPPEMVYRHPFPGPGLGVRILGEVKREYADLLRRADAIFIEELRGTTATAQDAAAGLCGEADVGKTWYDLTSQAFAVFLPVKSVGVMGDGRTYDYVTSLRAVQTTDFMTAHWAHLPYALLGRASNRIINEVRGINRVVYDISGKPPATIEWE.

A Glutamine amidotransferase type-1 domain is found at 4-202 (KILILDFGSQ…VLQIAGAKPD (199 aa)). The active-site Nucleophile is Cys81. Residues His176 and Glu178 contribute to the active site. One can recognise a GMPS ATP-PPase domain in the interval 203 to 395 (WIMSNHIEEA…LGLPPEMVYR (193 aa)). ATP is bound at residue 230–236 (SGGVDSS).

Homodimer.

It catalyses the reaction XMP + L-glutamine + ATP + H2O = GMP + L-glutamate + AMP + diphosphate + 2 H(+). It participates in purine metabolism; GMP biosynthesis; GMP from XMP (L-Gln route): step 1/1. In terms of biological role, catalyzes the synthesis of GMP from XMP. The protein is GMP synthase [glutamine-hydrolyzing] of Burkholderia ambifaria (strain ATCC BAA-244 / DSM 16087 / CCUG 44356 / LMG 19182 / AMMD) (Burkholderia cepacia (strain AMMD)).